A 759-amino-acid polypeptide reads, in one-letter code: Subtilisin-like protease SBT3.10 (759 aa).

A signal peptide spans 1–25 (MSKTIILLAFFLSIVLNVQISFVVA). Positions 26-108 (ESKVYVVYLG…VIPNTLYEMT (83 aa)) are cleaved as a propeptide — activation peptide. In terms of domain architecture, Inhibitor I9 spans 29-106 (VYVVYLGEKE…VQVIPNTLYE (78 aa)). Positions 112-606 (TWDYLGVSPG…GGLINPEKAV (495 aa)) constitute a Peptidase S8 domain. The active-site Charge relay system is aspartate 142. Residues asparagine 175 and asparagine 202 are each glycosylated (N-linked (GlcNAc...) asparagine). Histidine 218 functions as the Charge relay system in the catalytic mechanism. N-linked (GlcNAc...) asparagine glycans are attached at residues asparagine 233 and asparagine 361. Positions 390–464 (DCEKLSANPK…ELGTDILFYI (75 aa)) constitute a PA domain. The active-site Charge relay system is the serine 537.

The protein belongs to the peptidase S8 family.

Its subcellular location is the secreted. The polypeptide is Subtilisin-like protease SBT3.10 (Arabidopsis thaliana (Mouse-ear cress)).